The chain runs to 228 residues: 5'-methylthioadenosine/S-adenosylhomocysteine nucleosidase (228 aa).

The Proton acceptor role is filled by glutamate 11. Substrate contacts are provided by residues glycine 77, isoleucine 151, and 172-173; that span reads ME. Catalysis depends on aspartate 196, which acts as the Proton donor.

This sequence belongs to the PNP/UDP phosphorylase family. MtnN subfamily.

The enzyme catalyses S-adenosyl-L-homocysteine + H2O = S-(5-deoxy-D-ribos-5-yl)-L-homocysteine + adenine. The catalysed reaction is S-methyl-5'-thioadenosine + H2O = 5-(methylsulfanyl)-D-ribose + adenine. It catalyses the reaction 5'-deoxyadenosine + H2O = 5-deoxy-D-ribose + adenine. The protein operates within amino-acid biosynthesis; L-methionine biosynthesis via salvage pathway; S-methyl-5-thio-alpha-D-ribose 1-phosphate from S-methyl-5'-thioadenosine (hydrolase route): step 1/2. Catalyzes the irreversible cleavage of the glycosidic bond in both 5'-methylthioadenosine (MTA) and S-adenosylhomocysteine (SAH/AdoHcy) to adenine and the corresponding thioribose, 5'-methylthioribose and S-ribosylhomocysteine, respectively. Also cleaves 5'-deoxyadenosine, a toxic by-product of radical S-adenosylmethionine (SAM) enzymes, into 5-deoxyribose and adenine. The polypeptide is 5'-methylthioadenosine/S-adenosylhomocysteine nucleosidase (Staphylococcus saprophyticus subsp. saprophyticus (strain ATCC 15305 / DSM 20229 / NCIMB 8711 / NCTC 7292 / S-41)).